A 1476-amino-acid polypeptide reads, in one-letter code: Membrane-associated guanylate kinase, WW and PDZ domain-containing protein 3 (1476 aa).

Residues 18 to 108 (CAVSWAGPPG…PIRLKTVKPG (91 aa)) enclose the PDZ 1 domain. An interaction with ADRB1 and TGFA region spans residues 18–108 (CAVSWAGPPG…PIRLKTVKPG (91 aa)). The Guanylate kinase-like domain occupies 116 to 290 (RHYLSLQFQK…SSMDFRNYMM (175 aa)). 123–130 (FQKGSIDH) is an ATP binding site. Positions 184–266 (TYDGNFYGTP…ETREMHSETS (83 aa)) are disordered. Residues 193-204 (PKPPAEPSPFQP) show a composition bias toward pro residues. Position 236 is a phosphoserine (serine 236). Residues 238-247 (LPEEEEDEDK) are compositionally biased toward acidic residues. WW domains follow at residues 296 to 329 (EPLP…DPRL) and 342 to 375 (GELP…NPVE). The PDZ 2 domain occupies 413 to 495 (RASLKKSTMG…NQYVNLTLCR (83 aa)). The interval 413-495 (RASLKKSTMG…NQYVNLTLCR (83 aa)) is interaction with PTEN. A disordered region spans residues 551–575 (LASDRLNGPSESSEQRASLASSGSS). A compositionally biased stretch (polar residues) spans 559–575 (PSESSEQRASLASSGSS). The PDZ 3 domain maps to 581 to 657 (TIPLIKGPKG…GADVPLLILR (77 aa)). Residue serine 598 is modified to Phosphoserine. Positions 664 to 691 (TKTAKTKTDTKENSGSLETINEPIPQPM) are disordered. Serine 702 carries the post-translational modification Phosphoserine. The region spanning 729-811 (DVFLRKQESG…NGHVLLTVRR (83 aa)) is the PDZ 4 domain. Positions 729–811 (DVFLRKQESG…NGHVLLTVRR (83 aa)) are interaction with ADGRB1. Residues 818–844 (KQPEDESHQAFSQNGSPRLNRAELPTR) are disordered. 2 positions are modified to phosphoserine: serine 833 and serine 916. Residues 852-939 (DVTLQRKENE…TVTLTVVAEE (88 aa)) enclose the PDZ 5 domain. An interaction with LPAR2 and GRIN2B region spans residues 852–939 (DVTLQRKENE…TVTLTVVAEE (88 aa)). The disordered stretch occupies residues 939–966 (EEHHGPPSGTNSARQSPALQHRPMGQAQ). Residues 946-956 (SGTNSARQSPA) show a composition bias toward polar residues. The PDZ 6 domain maps to 1022–1104 (PVELERGPRG…KVLLLLRPGT (83 aa)). Disordered stretches follow at residues 1109–1151 (DHGD…ATED) and 1168–1476 (TVQE…DKQL). The span at 1114-1123 (DTNSPSSSNV) shows a compositional bias: polar residues. 2 stretches are compositionally biased toward basic and acidic residues: residues 1193–1211 (SKKD…RLKG) and 1230–1265 (RHSE…ESKG). Residues 1285–1304 (SSSPKKQQKIGGNSLSNTEG) are compositionally biased toward polar residues. Basic and acidic residues-rich tracts occupy residues 1317–1340 (HPRD…KDLK) and 1350–1361 (KSPEKKSSKVDE). Serine 1321 carries the phosphoserine modification. The segment covering 1363–1373 (SLPSKKTSSTA) has biased composition (polar residues). Residues 1419–1437 (ADDHKGRESEVTDRCRERA) are compositionally biased toward basic and acidic residues.

The protein belongs to the MAGUK family. As to quaternary structure, interacts with ADRB1, ADGRB1, LPAR2/EDG4, GRIN2B, PTEN, and PTPRB. Interacts with unidentified tyrosine phosphorylated proteins. Interacts with FZD4, FZD7, TGFA and VANGL2. Interacts with DLL1. Interacts with PRRG4 (via cytoplasmic domain). Widely expressed. Colocalizes with TGFA in neurons in the cortex and dentate gyrus, as well as in ependymal cells and some astrocytes (at protein level). Present in lens epithelium.

It is found in the cell membrane. Its subcellular location is the cell junction. The protein resides in the tight junction. It localises to the nucleus. In terms of biological role, acts as a scaffolding protein at cell-cell junctions, thereby regulating various cellular and signaling processes. Cooperates with PTEN to modulate the kinase activity of AKT1. Its interaction with PTPRB and tyrosine phosphorylated proteins suggests that it may link receptor tyrosine phosphatase with its substrates at the plasma membrane. In polarized epithelial cells, involved in efficient trafficking of TGFA to the cell surface. Regulates the ability of LPAR2 to activate ERK and RhoA pathways. Regulates the JNK signaling cascade via its interaction with FZD4 and VANGL2. The sequence is that of Membrane-associated guanylate kinase, WW and PDZ domain-containing protein 3 (Magi3) from Mus musculus (Mouse).